The primary structure comprises 440 residues: 3-phosphoshikimate 1-carboxyvinyltransferase (440 aa).

3-phosphoshikimate is bound by residues Lys-26, Ser-27, and Arg-31. Residue Lys-26 participates in phosphoenolpyruvate binding. 2 residues coordinate phosphoenolpyruvate: Gly-99 and Arg-127. Ser-172, Gln-174, Asp-320, and Lys-347 together coordinate 3-phosphoshikimate. Residue Gln-174 coordinates phosphoenolpyruvate. Asp-320 acts as the Proton acceptor in catalysis. Phosphoenolpyruvate contacts are provided by Arg-351 and Arg-392.

The protein belongs to the EPSP synthase family. In terms of assembly, monomer.

The protein resides in the cytoplasm. It carries out the reaction 3-phosphoshikimate + phosphoenolpyruvate = 5-O-(1-carboxyvinyl)-3-phosphoshikimate + phosphate. Its pathway is metabolic intermediate biosynthesis; chorismate biosynthesis; chorismate from D-erythrose 4-phosphate and phosphoenolpyruvate: step 6/7. Catalyzes the transfer of the enolpyruvyl moiety of phosphoenolpyruvate (PEP) to the 5-hydroxyl of shikimate-3-phosphate (S3P) to produce enolpyruvyl shikimate-3-phosphate and inorganic phosphate. This Xanthomonas oryzae pv. oryzae (strain MAFF 311018) protein is 3-phosphoshikimate 1-carboxyvinyltransferase.